A 159-amino-acid polypeptide reads, in one-letter code: SsrA-binding protein (159 aa).

The tract at residues 134-159 (KLHDKRETSKERDWNRQKNRLLKERG) is disordered. Positions 137-159 (DKRETSKERDWNRQKNRLLKERG) are enriched in basic and acidic residues.

Belongs to the SmpB family.

The protein localises to the cytoplasm. Its function is as follows. Required for rescue of stalled ribosomes mediated by trans-translation. Binds to transfer-messenger RNA (tmRNA), required for stable association of tmRNA with ribosomes. tmRNA and SmpB together mimic tRNA shape, replacing the anticodon stem-loop with SmpB. tmRNA is encoded by the ssrA gene; the 2 termini fold to resemble tRNA(Ala) and it encodes a 'tag peptide', a short internal open reading frame. During trans-translation Ala-aminoacylated tmRNA acts like a tRNA, entering the A-site of stalled ribosomes, displacing the stalled mRNA. The ribosome then switches to translate the ORF on the tmRNA; the nascent peptide is terminated with the 'tag peptide' encoded by the tmRNA and targeted for degradation. The ribosome is freed to recommence translation, which seems to be the essential function of trans-translation. This Rhizobium meliloti (strain 1021) (Ensifer meliloti) protein is SsrA-binding protein.